Consider the following 273-residue polypeptide: Glutamate 5-kinase (273 aa).

Position 15 (Lys-15) interacts with ATP. Positions 55, 142, and 158 each coordinate substrate. ATP contacts are provided by residues 178 to 179 (SD) and 220 to 226 (TGGMLSK).

This sequence belongs to the glutamate 5-kinase family.

It localises to the cytoplasm. The enzyme catalyses L-glutamate + ATP = L-glutamyl 5-phosphate + ADP. Its pathway is amino-acid biosynthesis; L-proline biosynthesis; L-glutamate 5-semialdehyde from L-glutamate: step 1/2. In terms of biological role, catalyzes the transfer of a phosphate group to glutamate to form L-glutamate 5-phosphate. The polypeptide is Glutamate 5-kinase (Streptococcus pyogenes serotype M18 (strain MGAS8232)).